Consider the following 426-residue polypeptide: Serine--tRNA ligase (426 aa).

231–233 (TAE) is an L-serine binding site. 262–264 (RSE) is an ATP binding site. Residue Glu-285 participates in L-serine binding. ATP is bound at residue 349-352 (EISS). An L-serine-binding site is contributed by Ser-384.

This sequence belongs to the class-II aminoacyl-tRNA synthetase family. Type-1 seryl-tRNA synthetase subfamily. As to quaternary structure, homodimer. The tRNA molecule binds across the dimer.

It localises to the cytoplasm. The enzyme catalyses tRNA(Ser) + L-serine + ATP = L-seryl-tRNA(Ser) + AMP + diphosphate + H(+). The catalysed reaction is tRNA(Sec) + L-serine + ATP = L-seryl-tRNA(Sec) + AMP + diphosphate + H(+). Its pathway is aminoacyl-tRNA biosynthesis; selenocysteinyl-tRNA(Sec) biosynthesis; L-seryl-tRNA(Sec) from L-serine and tRNA(Sec): step 1/1. Catalyzes the attachment of serine to tRNA(Ser). Is also able to aminoacylate tRNA(Sec) with serine, to form the misacylated tRNA L-seryl-tRNA(Sec), which will be further converted into selenocysteinyl-tRNA(Sec). The chain is Serine--tRNA ligase from Laribacter hongkongensis (strain HLHK9).